Here is a 92-residue protein sequence, read N- to C-terminus: UPF0250 protein XAC0666 (92 aa).

Belongs to the UPF0250 family.

This is UPF0250 protein XAC0666 from Xanthomonas axonopodis pv. citri (strain 306).